Reading from the N-terminus, the 900-residue chain is Aldos-2-ulose dehydratase (900 aa).

Positions 1-433 (MYSKVFLKPH…NPSINVFLST (433 aa)) are dehydratase domain. An ascopyrone M-binding site is contributed by Y35. The Mg(2+) site is built by D101, T103, N105, F107, and D109. Y116, M120, H155, H215, H295, and H337 together coordinate ascopyrone M. Residue H155 is the Proton acceptor of the active site. H215, H295, H337, D343, D345, D347, E349, and E351 together coordinate Zn(2+). Ascopyrone M is bound by residues Y414, Y419, and A627. Positions 434–739 (GILAERLDEE…EFPGFETFST (306 aa)) are isomerase domain. The 1,5-anhydro-D-fructose site is built by A627 and H630. 3 residues coordinate Zn(2+): H630, H632, and E639. E639 and H641 together coordinate ascopyrone M. H641 provides a ligand contact to 1,5-anhydro-D-fructose. Zn(2+) is bound at residue H709. Residue W726 coordinates ascopyrone M. Position 726 (W726) interacts with 1,5-anhydro-D-fructose.

Homodimer. The cofactor is Zn(2+).

It carries out the reaction 1,5-anhydro-D-fructose = microthecin + H2O. It catalyses the reaction 1,5-anhydro-D-fructose = ascopyrone M + H2O. The catalysed reaction is ascopyrone M = microthecin. The enzyme catalyses 2-dehydro-D-glucose = cortalcerone + H2O. The protein operates within carbohydrate metabolism; 1,5-anhydro-D-fructose degradation. Functionally, a bifunctional enzyme which catalyzes the dehydration of anhydrofructose into ascopyrone M, and the isomerization of ascopyrone M into microthecin. To a lesser extent, can also act on 2-dehydro-D-glucopyranose (D-glucosone), leading to the antibiotic cortalcerone. The polypeptide is Aldos-2-ulose dehydratase (Phanerodontia chrysosporium (White-rot fungus)).